Reading from the N-terminus, the 356-residue chain is Nucleotide-binding protein GDI1189/Gdia_1902 (356 aa).

20 to 27 is an ATP binding site; it reads GLSGAGKS. Residue 65–68 participates in GTP binding; the sequence is DSRT. Residues 285–313 are disordered; it reads EPGGTCDSPGKPAHIEKGAAPTDVQSGGA.

The protein belongs to the RapZ-like family.

Its function is as follows. Displays ATPase and GTPase activities. This Gluconacetobacter diazotrophicus (strain ATCC 49037 / DSM 5601 / CCUG 37298 / CIP 103539 / LMG 7603 / PAl5) protein is Nucleotide-binding protein GDI1189/Gdia_1902.